We begin with the raw amino-acid sequence, 317 residues long: Beta-ketoacyl-[acyl-carrier-protein] synthase III (317 aa).

Catalysis depends on residues cysteine 112 and histidine 244. The interval 245–249 (QANLR) is ACP-binding. Asparagine 274 is an active-site residue.

Belongs to the thiolase-like superfamily. FabH family. Homodimer.

Its subcellular location is the cytoplasm. The enzyme catalyses malonyl-[ACP] + acetyl-CoA + H(+) = 3-oxobutanoyl-[ACP] + CO2 + CoA. Its pathway is lipid metabolism; fatty acid biosynthesis. Its function is as follows. Catalyzes the condensation reaction of fatty acid synthesis by the addition to an acyl acceptor of two carbons from malonyl-ACP. Catalyzes the first condensation reaction which initiates fatty acid synthesis and may therefore play a role in governing the total rate of fatty acid production. Possesses both acetoacetyl-ACP synthase and acetyl transacylase activities. Its substrate specificity determines the biosynthesis of branched-chain and/or straight-chain of fatty acids. The protein is Beta-ketoacyl-[acyl-carrier-protein] synthase III of Shigella dysenteriae serotype 1 (strain Sd197).